The following is a 58-amino-acid chain: Large ribosomal subunit protein bL32c (58 aa).

Basic residues predominate over residues 1–19; it reads MAVPKKRKSKMKTRLRKAQ. Residues 1–25 form a disordered region; that stretch reads MAVPKKRKSKMKTRLRKAQWKSEAS.

Belongs to the bacterial ribosomal protein bL32 family.

It localises to the plastid. The protein localises to the chloroplast. This chain is Large ribosomal subunit protein bL32c (rpl32), found in Chlorella vulgaris (Green alga).